The chain runs to 351 residues: DNA polymerase IV (351 aa).

The UmuC domain maps to 4–185 (IIHVDMDCFF…LPLAKIPGVG (182 aa)). Mg(2+) is bound by residues aspartate 8 and aspartate 103. Residue glutamate 104 is part of the active site.

It belongs to the DNA polymerase type-Y family. In terms of assembly, monomer. Mg(2+) serves as cofactor.

It is found in the cytoplasm. The enzyme catalyses DNA(n) + a 2'-deoxyribonucleoside 5'-triphosphate = DNA(n+1) + diphosphate. In terms of biological role, poorly processive, error-prone DNA polymerase involved in untargeted mutagenesis. Copies undamaged DNA at stalled replication forks, which arise in vivo from mismatched or misaligned primer ends. These misaligned primers can be extended by PolIV. Exhibits no 3'-5' exonuclease (proofreading) activity. May be involved in translesional synthesis, in conjunction with the beta clamp from PolIII. This chain is DNA polymerase IV, found in Escherichia coli (strain ATCC 8739 / DSM 1576 / NBRC 3972 / NCIMB 8545 / WDCM 00012 / Crooks).